The following is a 271-amino-acid chain: Mitochondrial distribution and morphology protein 12 (271 aa).

The SMP-LTD domain maps to 1–267; it reads MSFDINWSTL…WPSWINLDFN (267 aa). Lysine 49 is covalently cross-linked (Glycyl lysine isopeptide (Lys-Gly) (interchain with G-Cter in ubiquitin)).

Belongs to the MDM12 family. Component of the ER-mitochondria encounter structure (ERMES) or MDM complex, composed of MMM1, MDM10, MDM12 and MDM34. An MMM1 homodimer associates with one molecule of MDM12 on each side in a pairwise head-to-tail manner, and the SMP-LTD domains of MMM1 and MDM12 generate a continuous hydrophobic tunnel for phospholipid trafficking. Interacts with PUF3.

The protein resides in the mitochondrion outer membrane. It localises to the endoplasmic reticulum membrane. In terms of biological role, component of the ERMES/MDM complex, which serves as a molecular tether to connect the endoplasmic reticulum (ER) and mitochondria. Components of this complex are involved in the control of mitochondrial shape and protein biogenesis, and function in nonvesicular lipid trafficking between the ER and mitochondria. MDM12 is required for the interaction of the ER-resident membrane protein MMM1 and the outer mitochondrial membrane-resident beta-barrel protein MDM10. The MDM12-MMM1 subcomplex functions in the major beta-barrel assembly pathway that is responsible for biogenesis of all mitochondrial outer membrane beta-barrel proteins, and acts in a late step after the SAM complex. The MDM10-MDM12-MMM1 subcomplex further acts in the TOM40-specific pathway after the action of the MDM12-MMM1 complex. Essential for establishing and maintaining the structure of mitochondria and maintenance of mtDNA nucleoids. The sequence is that of Mitochondrial distribution and morphology protein 12 from Saccharomyces cerevisiae (strain AWRI1631) (Baker's yeast).